The sequence spans 163 residues: Inorganic pyrophosphatase (163 aa).

Position 9 (Glu-9) interacts with Mg(2+). The substrate site is built by Lys-17, Arg-31, and Tyr-43. Asp-53, Asp-58, Asp-85, and Asp-90 together coordinate Mg(2+). Catalysis depends on Asp-90, which acts as the Proton acceptor. Tyr-127 serves as a coordination point for substrate.

This sequence belongs to the PPase family. In terms of assembly, homohexamer. The cofactor is Mg(2+).

It is found in the cytoplasm. The catalysed reaction is diphosphate + H2O = 2 phosphate + H(+). Its function is as follows. Catalyzes the hydrolysis of inorganic pyrophosphate (PPi) forming two phosphate ions. This is Inorganic pyrophosphatase from Leifsonia xyli subsp. xyli (strain CTCB07).